A 203-amino-acid polypeptide reads, in one-letter code: Protein GrpE 2 (203 aa).

The segment covering 1-12 (MPTRPQEPDRAA) has biased composition (basic and acidic residues). The tract at residues 1–64 (MPTRPQEPDR…APAEDEYTTA (64 aa)) is disordered. Residues 45–56 (GEPGPDAAGPAP) show a composition bias toward low complexity.

The protein belongs to the GrpE family. In terms of assembly, homodimer.

It is found in the cytoplasm. Participates actively in the response to hyperosmotic and heat shock by preventing the aggregation of stress-denatured proteins, in association with DnaK and GrpE. It is the nucleotide exchange factor for DnaK and may function as a thermosensor. Unfolded proteins bind initially to DnaJ; upon interaction with the DnaJ-bound protein, DnaK hydrolyzes its bound ATP, resulting in the formation of a stable complex. GrpE releases ADP from DnaK; ATP binding to DnaK triggers the release of the substrate protein, thus completing the reaction cycle. Several rounds of ATP-dependent interactions between DnaJ, DnaK and GrpE are required for fully efficient folding. The sequence is that of Protein GrpE 2 from Streptomyces avermitilis (strain ATCC 31267 / DSM 46492 / JCM 5070 / NBRC 14893 / NCIMB 12804 / NRRL 8165 / MA-4680).